Here is a 156-residue protein sequence, read N- to C-terminus: Arginine repressor (156 aa).

This sequence belongs to the ArgR family.

It is found in the cytoplasm. It participates in amino-acid biosynthesis; L-arginine biosynthesis [regulation]. Its function is as follows. Regulates arginine biosynthesis genes. The chain is Arginine repressor from Shigella boydii serotype 18 (strain CDC 3083-94 / BS512).